A 275-amino-acid chain; its full sequence is Lectin (275 aa).

A signal peptide spans 1 to 30 (MASLQTQMISFYLIFLSILLTTIFFFKVNS). Residues Asp-111 and Gly-129 each coordinate D-glucose. Glu-149 and Asp-151 together coordinate Mn(2+). Asp-151, Phe-153, Asn-155, and Asp-159 together coordinate Ca(2+). 2 residues coordinate Mn(2+): Asp-159 and His-166. Positions 211 to 217 (NSLEEEN) are excised as a propeptide. D-glucose is bound by residues Gly-246 and Ala-247. Residues 270-275 (KQAADA) constitute a propeptide that is removed on maturation.

This sequence belongs to the leguminous lectin family. As to quaternary structure, heterotetramer of two alpha and two beta chains. In terms of processing, the mature form consists of two chains, alpha and beta, produced by cleavage of the immature protein. These remain cleaved, yet fold together to form one subunit.

Its function is as follows. D-mannose specific lectin. This Lens culinaris subsp. culinaris (Cultivated lentil) protein is Lectin.